The following is a 185-amino-acid chain: Ribosome-recycling factor (185 aa).

A disordered region spans residues 138–160 (AMDKAVKDGEVGEDEGARGEKEL).

It belongs to the RRF family.

The protein localises to the cytoplasm. In terms of biological role, responsible for the release of ribosomes from messenger RNA at the termination of protein biosynthesis. May increase the efficiency of translation by recycling ribosomes from one round of translation to another. This is Ribosome-recycling factor from Micrococcus luteus (strain ATCC 4698 / DSM 20030 / JCM 1464 / CCM 169 / CCUG 5858 / IAM 1056 / NBRC 3333 / NCIMB 9278 / NCTC 2665 / VKM Ac-2230) (Micrococcus lysodeikticus).